An 86-amino-acid chain; its full sequence is Large ribosomal subunit protein bL27 (86 aa).

Positions 1–10 (MAQKKGGGST) are enriched in gly residues. The tract at residues 1–22 (MAQKKGGGSTRNGRDSESKRLG) is disordered.

The protein belongs to the bacterial ribosomal protein bL27 family.

The chain is Large ribosomal subunit protein bL27 from Polynucleobacter asymbioticus (strain DSM 18221 / CIP 109841 / QLW-P1DMWA-1) (Polynucleobacter necessarius subsp. asymbioticus).